The chain runs to 199 residues: Ras-related protein Rab-7b (199 aa).

GTP-binding positions include 15–22, 34–40, 63–67, 124–127, and 154–155; these read GALGVGKT, FEEYQTT, DTGGQ, NKID, and AK. Short sequence motifs (switch) lie at residues 28–41 and 67–82; these read YVHK…QTTL and QERF…KGSD. Ser-186 carries the post-translational modification Phosphoserine. Residues Cys-198 and Cys-199 are each lipidated (S-geranylgeranyl cysteine).

It belongs to the small GTPase superfamily. Rab family.

The protein resides in the late endosome. The protein localises to the lysosome. It is found in the golgi apparatus. It localises to the trans-Golgi network. Its subcellular location is the cytoplasmic vesicle. The protein resides in the phagosome. The protein localises to the phagosome membrane. Functionally, controls vesicular trafficking from endosomes to the trans-Golgi network (TGN). Acts as a negative regulator of TLR9 signaling and can suppress TLR9-triggered TNFA, IL6, and IFNB production in macrophages by promoting TLR9 lysosomal degradation. Also negatively regulates TLR4 signaling in macrophages by promoting lysosomal degradation of TLR4. Promotes megakaryocytic differentiation by increasing NF-kappa-B-dependent IL6 production and subsequently enhancing the association of STAT3 with GATA1. Not involved in the regulation of the EGF- and EGFR degradation pathway. This chain is Ras-related protein Rab-7b (Rab7b), found in Mus musculus (Mouse).